A 54-amino-acid polypeptide reads, in one-letter code: Ovomucoid (54 aa).

Positions valine 4–cysteine 54 constitute a Kazal-like domain. 3 disulfides stabilise this stretch: cysteine 6–cysteine 36, cysteine 14–cysteine 33, and cysteine 22–cysteine 54. Residue asparagine 43 is glycosylated (N-linked (GlcNAc...) asparagine).

It localises to the secreted. The sequence is that of Ovomucoid from Opisthocomus hoazin (Hoatzin).